The sequence spans 189 residues: Leucine repeat adapter protein 25 (189 aa).

The residue at position 28 (S28) is a Phosphoserine. Residues E54–P83 are disordered. The span at H67–P83 shows a compositional bias: low complexity. An LRR repeat occupies L86–L114. The disordered stretch occupies residues D141–N175. Positions A159–T169 are enriched in pro residues. S188 carries the phosphoserine modification.

This sequence belongs to the FAM89 family. As to quaternary structure, interacts with SKI. Interacts (via LRR repeat) with CDC42BPA (via AGC-kinase C-terminal domain), CDC42BPB (via AGC-kinase C-terminal domain) and LIMK1 (via LIM zinc-binding domains). Forms a tripartite complex with CDC42BPA, CDC42BPB and LIMK1.

Its subcellular location is the cytoplasm. It localises to the cell projection. The protein resides in the lamellipodium. Functionally, negatively regulates TGF-beta-induced signaling; in cooperation with SKI prevents the translocation of SMAD2 from the nucleus to the cytoplasm in response to TGF-beta. Acts as an adapter that mediates the specific recognition of LIMK1 by CDC42BPA and CDC42BPB in the lamellipodia. LRAP25-mediated CDC42BPA/CDC42BPB targeting to LIMK1 and the lamellipodium results in LIMK1 activation and the subsequent phosphorylation of CFL1 which is important for lamellipodial F-actin regulation. The chain is Leucine repeat adapter protein 25 (FAM89B) from Homo sapiens (Human).